The chain runs to 476 residues: MNFETIIGLEVHVELKTNSKIFSPSTNEFGSDPNTNVNPIDLGYPGTLPVLNEEAVNFAMKAAMALNCEIATDTKFDRKNYFYPDNPKAYQISQFDQPIGENGWIEIEVNGEKKKIGITRLHLEEDAGKLTHGEDGYSYVDFNRQGTPLIEIVSEPDMRSPEEAYAYLEKLKNIIQYTGVSDVKMQEGSLRCDANISLRPIGQEEFGTKAELKNLNSFSYVQKGLEFEEKRQEKELLSGGEILQETRRYDEKTKETILMRVKEGSDDYRYFPEPDLVPLYIDEEWKERVRSEIPELPDARLERYINELGLSEYDANVLTASKQMSDFFEEATAEGADMKQVSNWLMGEVSAYMNKHYKELDELAITPEALAKMINLIEDGTISSKIAKKVFAELVENGGDPQKIVEEKGLVQISDPAQLKQIVNEVLDQNEQSIIDFKNGKNKAKGFLVGQIMKATKGQANPPLVNKILAEELNNR.

This sequence belongs to the GatB/GatE family. GatB subfamily. As to quaternary structure, heterotrimer of A, B and C subunits.

The catalysed reaction is L-glutamyl-tRNA(Gln) + L-glutamine + ATP + H2O = L-glutaminyl-tRNA(Gln) + L-glutamate + ADP + phosphate + H(+). The enzyme catalyses L-aspartyl-tRNA(Asn) + L-glutamine + ATP + H2O = L-asparaginyl-tRNA(Asn) + L-glutamate + ADP + phosphate + 2 H(+). In terms of biological role, allows the formation of correctly charged Asn-tRNA(Asn) or Gln-tRNA(Gln) through the transamidation of misacylated Asp-tRNA(Asn) or Glu-tRNA(Gln) in organisms which lack either or both of asparaginyl-tRNA or glutaminyl-tRNA synthetases. The reaction takes place in the presence of glutamine and ATP through an activated phospho-Asp-tRNA(Asn) or phospho-Glu-tRNA(Gln). The chain is Aspartyl/glutamyl-tRNA(Asn/Gln) amidotransferase subunit B from Oceanobacillus iheyensis (strain DSM 14371 / CIP 107618 / JCM 11309 / KCTC 3954 / HTE831).